The sequence spans 505 residues: Phosphoethanolamine N-methyltransferase (505 aa).

Residues G76, R81, D97, D122, V123, and N141 each contribute to the S-adenosyl-L-homocysteine site. Positions 174, 179, 180, 184, and 191 each coordinate phosphocholine. N-methylethanolamine phosphate is bound by residues 260–261 and Y269; that span reads QY. Y269 is a binding site for phosphocholine. S-adenosyl-L-homocysteine contacts are provided by V278, S279, G305, D327, D353, C354, and R370. Phosphocholine contacts are provided by Y401, Y415, R419, Y421, and K487. N-methylethanolamine phosphate is bound by residues Y401, Y415, 419–421, and K487; that span reads RGY.

The protein belongs to the class I-like SAM-binding methyltransferase superfamily. PEAMT family.

It carries out the reaction phosphoethanolamine + S-adenosyl-L-methionine = N-methylethanolamine phosphate + S-adenosyl-L-homocysteine + H(+). It catalyses the reaction N-methylethanolamine phosphate + S-adenosyl-L-methionine = N,N-dimethylethanolamine phosphate + S-adenosyl-L-homocysteine + H(+). The catalysed reaction is N,N-dimethylethanolamine phosphate + S-adenosyl-L-methionine = phosphocholine + S-adenosyl-L-homocysteine + H(+). Its pathway is phospholipid metabolism; phosphatidylcholine biosynthesis; phosphocholine from phosphoethanolamine: step 1/1. Inhibited by phosphatidic acid. Its function is as follows. Involved in phosphocholine biosynthesis. Catalyzes the N-methylation of phosphoethanolamine, phosphomonomethylethanolamine and phosphodimethylethanolamine, the three methylation steps required to convert phosphoethanolamine to phosphocholine (PC). This chain is Phosphoethanolamine N-methyltransferase, found in Triticum aestivum (Wheat).